Reading from the N-terminus, the 200-residue chain is ATP synthase subunit b 1 (200 aa).

Residues 14–34 traverse the membrane as a helical segment; it reads AAVIVVVSLMAFCCAGFAVAA.

The protein belongs to the ATPase B chain family. In terms of assembly, F-type ATPases have 2 components, F(1) - the catalytic core - and F(0) - the membrane proton channel. F(1) has five subunits: alpha(3), beta(3), gamma(1), delta(1), epsilon(1). F(0) has three main subunits: a(1), b(2) and c(10-14). The alpha and beta chains form an alternating ring which encloses part of the gamma chain. F(1) is attached to F(0) by a central stalk formed by the gamma and epsilon chains, while a peripheral stalk is formed by the delta and b chains.

Its subcellular location is the cell inner membrane. Functionally, f(1)F(0) ATP synthase produces ATP from ADP in the presence of a proton or sodium gradient. F-type ATPases consist of two structural domains, F(1) containing the extramembraneous catalytic core and F(0) containing the membrane proton channel, linked together by a central stalk and a peripheral stalk. During catalysis, ATP synthesis in the catalytic domain of F(1) is coupled via a rotary mechanism of the central stalk subunits to proton translocation. In terms of biological role, component of the F(0) channel, it forms part of the peripheral stalk, linking F(1) to F(0). This chain is ATP synthase subunit b 1, found in Desulfosudis oleivorans (strain DSM 6200 / JCM 39069 / Hxd3) (Desulfococcus oleovorans).